The primary structure comprises 86 residues: Large ribosomal subunit protein uL23 (86 aa).

Belongs to the universal ribosomal protein uL23 family. As to quaternary structure, part of the 50S ribosomal subunit. Contacts protein L29.

Binds to 23S rRNA. One of the proteins that surrounds the polypeptide exit tunnel on the outside of the ribosome. In Thermococcus sibiricus (strain DSM 12597 / MM 739), this protein is Large ribosomal subunit protein uL23.